A 184-amino-acid polypeptide reads, in one-letter code: Ribosome-recycling factor (184 aa).

Residues 141 to 161 (KKNDKAISEDDQRKGQDDVQK) form a disordered region.

Belongs to the RRF family.

The protein resides in the cytoplasm. Functionally, responsible for the release of ribosomes from messenger RNA at the termination of protein biosynthesis. May increase the efficiency of translation by recycling ribosomes from one round of translation to another. In Solidesulfovibrio magneticus (strain ATCC 700980 / DSM 13731 / RS-1) (Desulfovibrio magneticus), this protein is Ribosome-recycling factor.